We begin with the raw amino-acid sequence, 236 residues long: LHFPL tetraspan subfamily member 3 protein (236 aa).

The next 4 membrane-spanning stretches (helical) occupy residues 36–56 (IGVL…VCFI), 110–130 (FFIG…TLFF), 140–160 (ICAW…MIFP), and 191–211 (ILAI…FVLG).

This sequence belongs to the LHFP family.

Its subcellular location is the membrane. The sequence is that of LHFPL tetraspan subfamily member 3 protein from Homo sapiens (Human).